We begin with the raw amino-acid sequence, 492 residues long: Catalase isozyme 2 (492 aa).

Active-site residues include His65 and Asn138. Residue Tyr348 coordinates heme.

Belongs to the catalase family. As to quaternary structure, homotetramer. Requires heme as cofactor.

It is found in the peroxisome. The protein localises to the glyoxysome. It catalyses the reaction 2 H2O2 = O2 + 2 H2O. In terms of biological role, occurs in almost all aerobically respiring organisms and serves to protect cells from the toxic effects of hydrogen peroxide. The polypeptide is Catalase isozyme 2 (CAT2) (Solanum tuberosum (Potato)).